We begin with the raw amino-acid sequence, 1786 residues long: Transcription initiation factor TFIID subunit 1b (1786 aa).

Disordered regions lie at residues glutamate 54 to leucine 83 and phenylalanine 350 to leucine 372. A compositionally biased stretch (basic and acidic residues) spans glycine 61 to leucine 83. The span at serine 352 to threonine 362 shows a compositional bias: polar residues. Positions methionine 574–leucine 650 constitute a Ubiquitin-like domain. Over residues methionine 1303–arginine 1313 the composition is skewed to basic residues. Disordered stretches follow at residues methionine 1303–alanine 1382, leucine 1397–alanine 1471, and serine 1596–glutamine 1634. A compositionally biased stretch (polar residues) spans threonine 1357–serine 1377. Residues leucine 1397 to alanine 1407 show a composition bias toward basic residues. The segment covering histidine 1433–leucine 1464 has biased composition (polar residues). 2 coiled-coil regions span residues arginine 1591–tyrosine 1620 and leucine 1752–arginine 1786. Positions arginine 1604–glutamine 1613 are enriched in basic residues. The 119-residue stretch at lysine 1656–alanine 1774 folds into the Bromo domain.

This sequence belongs to the TAF1 family. Component of the TFIID complex. TFIID is composed of TATA binding protein (TBP) and a number of TBP-associated factors (TAFs) whose MWs range from 14-217 kDa. Expressed in roots, shoots, leaves and inflorescences.

Its subcellular location is the nucleus. Functionally, TAFs are components of the transcription factor IID (TFIID) complex that is essential for mediating regulation of RNA polymerase transcription. Core scaffold of the TFIID complex. Acts as a histone acetyltransferase involved in the light regulation of growth and gene expression. Required for H3K9, H3K27, and H4K12 acetylation on the target promoters. The chain is Transcription initiation factor TFIID subunit 1b (TAF1B) from Arabidopsis thaliana (Mouse-ear cress).